Consider the following 692-residue polypeptide: Elongation factor G (692 aa).

A tr-type G domain is found at 8–283 (EMTRNIGIMA…AVLDYMPAPT (276 aa)). GTP is bound by residues 17–24 (AHIDAGKT), 81–85 (DTPGH), and 135–138 (NKMD).

It belongs to the TRAFAC class translation factor GTPase superfamily. Classic translation factor GTPase family. EF-G/EF-2 subfamily.

The protein localises to the cytoplasm. In terms of biological role, catalyzes the GTP-dependent ribosomal translocation step during translation elongation. During this step, the ribosome changes from the pre-translocational (PRE) to the post-translocational (POST) state as the newly formed A-site-bound peptidyl-tRNA and P-site-bound deacylated tRNA move to the P and E sites, respectively. Catalyzes the coordinated movement of the two tRNA molecules, the mRNA and conformational changes in the ribosome. This Citrifermentans bemidjiense (strain ATCC BAA-1014 / DSM 16622 / JCM 12645 / Bem) (Geobacter bemidjiensis) protein is Elongation factor G.